The primary structure comprises 738 residues: Outer membrane protein assembly factor BamA (738 aa).

An N-terminal signal peptide occupies residues 1–13 (MVWLLFLSSFCFA). POTRA domains follow at residues 14–81 (DEVV…LQEN), 82–159 (PILR…VKEA), 162–248 (TVIR…LKEG), 251–329 (YSFG…VVST), and 332–404 (YRIR…VKER).

This sequence belongs to the BamA family. As to quaternary structure, part of the Bam complex.

It localises to the cell outer membrane. In terms of biological role, part of the outer membrane protein assembly complex, which is involved in assembly and insertion of beta-barrel proteins into the outer membrane. This chain is Outer membrane protein assembly factor BamA, found in Neorickettsia risticii (strain Illinois).